Here is a 596-residue protein sequence, read N- to C-terminus: MATLSMQVSTLSKQVKNLNTFGMGSASKLPMVARRVSTTRLRPICSASLQVEEETRRSGNYQAPVWNNDFIQSFSTDKYKDEKFLKKKEELIAQVKVLLNTKMEAVKQLELIEDLRNLGLTYYFEDEFKKILTSIYNEHKGFKNEQVGDLYFTSLAFRLLRLHGFDVSEDVFNFFKNEDGSDFKASLGENTKDVLELYEASFLIRVGEVTLEQARVFSTKILEKKVEEGIKDEKLLAWIQHSLALPLHWRIQRLEARWFLDAYKARKDMNPIIYELGKIDFHIIQETQLQEVQEVSQWWTNTNLAEKLPFVRDRIVECYFWALGLFEPHEYGYQRKMAAIIITFVTIIDDVYDVYGTLDELQLFTDAIRKWDVESISTLPYYMQVCYLAVFTYASELAYDILKDQGFNSISYLQRSWLSLVEGFFQEAKWYYAGYTPTLAEYLENAKVSISSPTIISQVYFTLPNSTERTVVENVFGYHNILYLSGMILRLADDLGTTQFELKRGDVQKAIQCYMNDNNATEEEGTEHVKYLLREAWQEMNSAMADPDCPLSEDLVFAAANLGRASQFIYLDGDGHGVQHSEIHNQMGGLIFEPYV.

The transit peptide at 1–46 (MATLSMQVSTLSKQVKNLNTFGMGSASKLPMVARRVSTTRLRPICS) directs the protein to the chloroplast. The Mn(2+) site is built by D349 and D353. The short motif at 349–353 (DDVYD) is the DDXXD motif element. Homodimerization stretches follow at residues 355 to 361 (YGTLDEL) and 427 to 464 (EAKW…FTLP). Residues D493 and E501 each contribute to the Mn(2+) site.

Belongs to the terpene synthase family. As to quaternary structure, homodimer. Requires Mn(2+) as cofactor. It depends on Mg(2+) as a cofactor.

The protein localises to the plastid. The protein resides in the chloroplast. It participates in secondary metabolite biosynthesis; terpenoid biosynthesis. Its function is as follows. Putative monoterpene synthase inactive on geranyl diphosphate (GPP). The chain is Putative terpene synthase 2, chloroplastic from Thymus vulgaris (Thyme).